Consider the following 307-residue polypeptide: UDP-3-O-acyl-N-acetylglucosamine deacetylase (307 aa).

The Zn(2+) site is built by His78, His235, and Asp239. The Proton donor role is filled by His262.

The protein belongs to the LpxC family. Requires Zn(2+) as cofactor.

It carries out the reaction a UDP-3-O-[(3R)-3-hydroxyacyl]-N-acetyl-alpha-D-glucosamine + H2O = a UDP-3-O-[(3R)-3-hydroxyacyl]-alpha-D-glucosamine + acetate. It functions in the pathway glycolipid biosynthesis; lipid IV(A) biosynthesis; lipid IV(A) from (3R)-3-hydroxytetradecanoyl-[acyl-carrier-protein] and UDP-N-acetyl-alpha-D-glucosamine: step 2/6. In terms of biological role, catalyzes the hydrolysis of UDP-3-O-myristoyl-N-acetylglucosamine to form UDP-3-O-myristoylglucosamine and acetate, the committed step in lipid A biosynthesis. This chain is UDP-3-O-acyl-N-acetylglucosamine deacetylase, found in Geotalea uraniireducens (strain Rf4) (Geobacter uraniireducens).